The primary structure comprises 151 residues: Calmodulin-like protein 9 (151 aa).

EF-hand domains lie at 8–43 (EQIQEFYEAFCLIDKDSDGFITKEKLTKVMKSMGKN), 44–79 (PKAEQLQQMMSDVDIFGNGGITFDDFLYIMAQNTSQ), 81–116 (SASDELIEVFRVFDRDGDGLISQLELGEGMKDMGMK), and 117–151 (ITAEEAEHMVREADLDGDGFLSFHEFSKMMIAASY). Asp94, Asp96, Asp98, Glu105, Asp130, Asp132, Asp134, and Glu141 together coordinate Ca(2+).

It belongs to the calmodulin family. As to quaternary structure, interacts with IQD1. Interacts with ILK1. Binds to ABCG36. In terms of tissue distribution, expressed in leaves, flowers and siliques.

Potential calcium sensor. The polypeptide is Calmodulin-like protein 9 (Arabidopsis thaliana (Mouse-ear cress)).